An 86-amino-acid chain; its full sequence is MAEVVDERVYTVPLRDAKKAPLKKRAPRAVKALRQFIERHMKAEEVRIGNDVNEKIWERGIKKPPSKIRVRAVKYADGTVEVRLAE.

It belongs to the eukaryotic ribosomal protein eL31 family.

The protein is Large ribosomal subunit protein eL31 of Methanopyrus kandleri (strain AV19 / DSM 6324 / JCM 9639 / NBRC 100938).